A 203-amino-acid chain; its full sequence is CASP-like protein 1B1 (203 aa).

The Cytoplasmic segment spans residues 1–24 (MALVNAEKPEVGSSPSSLGPRNKS). A helical membrane pass occupies residues 25–45 (WVLLMLRFVAFLATAAATIVM). Topologically, residues 46–76 (AANRETKTFVVATIGSTPIKATVTAKFQHTP) are extracellular. Residues 77-97 (AFVFFVIANGMGSIHNLVMIA) form a helical membrane-spanning segment. Residues 98 to 114 (GDTFVRKFDYKGLRWVT) are Cytoplasmic-facing. The helical transmembrane segment at 115–135 (VAILDMLTAALISGGVNAAVF) threads the bilayer. Over 136-165 (MAELGKNGNSHAKWNKICDRFGSFCDHGGA) the chain is Extracellular. The chain crosses the membrane as a helical span at residues 166–186 (AIIASFIGLLLMLVISIISII). Topologically, residues 187–203 (KLLKPKSPLVDSHVLAP) are cytoplasmic.

Belongs to the Casparian strip membrane proteins (CASP) family. Homodimer and heterodimers.

It localises to the cell membrane. In Ricinus communis (Castor bean), this protein is CASP-like protein 1B1.